Consider the following 457-residue polypeptide: F-box/LRR-repeat protein At2g42730 (457 aa).

The 47-residue stretch at 4-50 (KDVISRLPDEVLGRILSLISTKEAVSTSVLSKRWKNMFVLVSNLDID) folds into the F-box domain. LRR repeat units follow at residues 265-288 (MDET…MRNL), 292-315 (IRNV…CKEM), and 318-343 (FDSL…LIKN).

This is F-box/LRR-repeat protein At2g42730 from Arabidopsis thaliana (Mouse-ear cress).